A 94-amino-acid polypeptide reads, in one-letter code: Co-chaperonin GroES (94 aa).

The protein belongs to the GroES chaperonin family. As to quaternary structure, heptamer of 7 subunits arranged in a ring. Interacts with the chaperonin GroEL.

Its subcellular location is the cytoplasm. Together with the chaperonin GroEL, plays an essential role in assisting protein folding. The GroEL-GroES system forms a nano-cage that allows encapsulation of the non-native substrate proteins and provides a physical environment optimized to promote and accelerate protein folding. GroES binds to the apical surface of the GroEL ring, thereby capping the opening of the GroEL channel. The protein is Co-chaperonin GroES of Bacillus sp. (strain PS3).